A 399-amino-acid polypeptide reads, in one-letter code: Succinate--CoA ligase [ADP-forming] subunit beta (399 aa).

In terms of domain architecture, ATP-grasp spans 9 to 254; sequence KQVLAKYGVP…EDEEDPMELE (246 aa). Residues lysine 46, 53–55, glutamate 109, cysteine 112, and glutamate 117 contribute to the ATP site; that span reads GRG. Mg(2+) is bound by residues asparagine 209 and aspartate 223. Substrate-binding positions include asparagine 274 and 331-333; that span reads GIM.

The protein belongs to the succinate/malate CoA ligase beta subunit family. As to quaternary structure, heterotetramer of two alpha and two beta subunits. The cofactor is Mg(2+).

The catalysed reaction is succinate + ATP + CoA = succinyl-CoA + ADP + phosphate. The enzyme catalyses GTP + succinate + CoA = succinyl-CoA + GDP + phosphate. The protein operates within carbohydrate metabolism; tricarboxylic acid cycle; succinate from succinyl-CoA (ligase route): step 1/1. Succinyl-CoA synthetase functions in the citric acid cycle (TCA), coupling the hydrolysis of succinyl-CoA to the synthesis of either ATP or GTP and thus represents the only step of substrate-level phosphorylation in the TCA. The beta subunit provides nucleotide specificity of the enzyme and binds the substrate succinate, while the binding sites for coenzyme A and phosphate are found in the alpha subunit. In Rhodospirillum rubrum (strain ATCC 11170 / ATH 1.1.1 / DSM 467 / LMG 4362 / NCIMB 8255 / S1), this protein is Succinate--CoA ligase [ADP-forming] subunit beta.